Reading from the N-terminus, the 492-residue chain is GDP-Man:Man(3)GlcNAc(2)-PP-Dol alpha-1,2-mannosyltransferase (492 aa).

The Lumenal segment spans residues 1–19 (MAADTGSWCVYAVLRFFYS). Residues 20-40 (LFFPGLMICGVLCVYLVIGLW) traverse the membrane as a helical segment. Over 41–233 (VIRWHLQRKK…SRNALLSKAK (193 aa)) the chain is Cytoplasmic. Positions 234-254 (LIYYYLFAFVYGLVGSCSDIV) form an intramembrane region, helical. Topologically, residues 255 to 399 (MVNSSWTLNH…IGLHTMWNEH (145 aa)) are cytoplasmic. Residues 400-420 (FGIGVVECMAAGTVILAHNSG) constitute an intramembrane region (helical). Topologically, residues 421 to 492 (GPKLDIVIPH…FLCSMEKLLT (72 aa)) are cytoplasmic.

This sequence belongs to the glycosyltransferase group 1 family. Glycosyltransferase 4 subfamily.

It localises to the endoplasmic reticulum membrane. It carries out the reaction an alpha-D-Man-(1-&gt;3)-[alpha-D-Man-(1-&gt;6)]-beta-D-Man-(1-&gt;4)-beta-D-GlcNAc-(1-&gt;4)-alpha-D-GlcNAc-diphospho-di-trans,poly-cis-dolichol + 2 GDP-alpha-D-mannose = an alpha-D-Man-(1-&gt;2)-alpha-D-Man-(1-&gt;2)-alpha-D-Man-(1-&gt;3)-[alpha-D-Man-(1-&gt;6)]-beta-D-Man-(1-&gt;4)-beta-D-GlcNAc-(1-&gt;4)-alpha-D-GlcNAc-diphospho-di-trans,poly-cis-dolichol + 2 GDP + 2 H(+). Its pathway is protein modification; protein glycosylation. Its function is as follows. GDP-Man:Man(3)GlcNAc(2)-PP-Dol alpha-1,2-mannosyltransferase that operates in the biosynthetic pathway of dolichol-linked oligosaccharides, the glycan precursors employed in protein asparagine (N)-glycosylation. The assembly of dolichol-linked oligosaccharides begins on the cytosolic side of the endoplasmic reticulum membrane and finishes in its lumen. The sequential addition of sugars to dolichol pyrophosphate produces dolichol-linked oligosaccharides containing fourteen sugars, including two GlcNAcs, nine mannoses and three glucoses. Once assembled, the oligosaccharide is transferred from the lipid to nascent proteins by oligosaccharyltransferases. Catalyzes, on the cytoplasmic face of the endoplasmic reticulum, the addition of the fourth and fifth mannose residues to the dolichol-linked oligosaccharide chain, to produce Man(5)GlcNAc(2)-PP-dolichol core oligosaccharide. Man(5)GlcNAc(2)-PP-dolichol is a substrate for ALG3, the following enzyme in the biosynthetic pathway. The chain is GDP-Man:Man(3)GlcNAc(2)-PP-Dol alpha-1,2-mannosyltransferase from Mus musculus (Mouse).